The primary structure comprises 217 residues: D-methionine transport system permease protein MetI (217 aa).

Over 1–19 the chain is Periplasmic; the sequence is MSEPMMWLLVRGVWETLAM. The ABC transmembrane type-1 domain maps to 13 to 204; the sequence is VWETLAMTFV…LLVILVYLIQ (192 aa). A helical membrane pass occupies residues 20 to 40; it reads TFVSGFFGFVVGLPVGVLLYV. Over 41–57 the chain is Cytoplasmic; the sequence is TRPGQIIANAKLYRTVS. Residues 58 to 78 form a helical membrane-spanning segment; it reads AIVNIFRSIPFIILLVWMIPF. Residues 79–80 lie on the Periplasmic side of the membrane; sequence TR. The chain crosses the membrane as a helical span at residues 81 to 101; that stretch reads VIVGTSIGLQAAIVPLTVGAA. Topologically, residues 102 to 151 are cytoplasmic; it reads PFIARMVENALLEIPTGLIEASRAMGATPMQIVRKVLLPEALPGLVNAAT. The chain crosses the membrane as a helical span at residues 152–172; that stretch reads ITLITLVGYSAMGGAVGAGGL. Over 173–185 the chain is Periplasmic; it reads GQIGYQYGYIGYN. A helical transmembrane segment spans residues 186–206; it reads ATVMNTVLVLLVILVYLIQFA. Residues 207–217 lie on the Cytoplasmic side of the membrane; that stretch reads GDRIVRAVTRK.

It belongs to the binding-protein-dependent transport system permease family. CysTW subfamily.

It localises to the cell inner membrane. In terms of biological role, part of the binding-protein-dependent transport system for D-methionine and the toxic methionine analog alpha-methyl-methionine. Probably responsible for the translocation of the substrate across the membrane. This Escherichia coli O157:H7 protein is D-methionine transport system permease protein MetI (metI).